We begin with the raw amino-acid sequence, 191 residues long: MPGAIDDHCPAQPGEEGTAFNVTMGYKYPPLCLGHATRCIHLETQVWAAYLLERLATGKWGHLVSGLSLCPLRQMKRGVIGDTPYFQYKPVGKLCPKNFEGPSKTLIWGDCVNSHAVVLKNDSYALVIDWAPKGYLKNTCSSGGGEFLEATYFISYWEDEDHHPTLHRWFGSFFTLKWEDKDITLHPQGLV.

Residues 1–191 (MPGAIDDHCP…DITLHPQGLV (191 aa)) are truncated surface protein.

This sequence belongs to the beta type-B retroviral envelope protein family. HERV class-II K(HML-8) env subfamily. Cerebellum and testis.

Its subcellular location is the virion. Functionally, retroviral envelope proteins mediate receptor recognition and membrane fusion during early infection. Endogenous envelope proteins may have kept, lost or modified their original function during evolution. The polypeptide is Putative endogenous retrovirus group K member 11-1 Env polyprotein (ERVK11-1) (Homo sapiens (Human)).